Reading from the N-terminus, the 132-residue chain is MSWTPFVDSQFVAPSNGLIQKGLIMGRDGTVWGVSDGWAVTAQEAKNLAGQVANPSSVPASGITLGGVKYMGLVADEENFQGFSSSKKQGVSGVVLKSAVIIGLFGEPHKNPNAYSFLKGVADSLVNAGTLQ.

The protein belongs to the profilin family. In terms of assembly, occurs in many kinds of cells as a complex with monomeric actin in a 1:1 ratio.

It is found in the cytoplasm. Its subcellular location is the cytoskeleton. Binds to actin and affects the structure of the cytoskeleton. At high concentrations, profilin prevents the polymerization of actin, whereas it enhances it at low concentrations. By binding to PIP2, it inhibits the formation of IP3 and DG. The chain is Profilin from Naegleria pringsheimi (Amoeba).